Here is a 391-residue protein sequence, read N- to C-terminus: Carbamoyl phosphate synthase small chain (391 aa).

The segment at 1–199 (MVRISGFCCA…TWEFIEGPTT (199 aa)) is CPSase. Residues serine 61, glycine 251, and glycine 253 each contribute to the L-glutamine site. The region spanning 203 to 388 (TVVAIDFGVK…VALMRDRQPT (186 aa)) is the Glutamine amidotransferase type-1 domain. Cysteine 279 (nucleophile) is an active-site residue. L-glutamine is bound by residues leucine 280, glutamine 283, asparagine 319, glycine 321, and phenylalanine 322. Catalysis depends on residues histidine 361 and glutamate 363.

This sequence belongs to the CarA family. Composed of two chains; the small (or glutamine) chain promotes the hydrolysis of glutamine to ammonia, which is used by the large (or ammonia) chain to synthesize carbamoyl phosphate. Tetramer of heterodimers (alpha,beta)4.

It catalyses the reaction hydrogencarbonate + L-glutamine + 2 ATP + H2O = carbamoyl phosphate + L-glutamate + 2 ADP + phosphate + 2 H(+). It carries out the reaction L-glutamine + H2O = L-glutamate + NH4(+). The protein operates within amino-acid biosynthesis; L-arginine biosynthesis; carbamoyl phosphate from bicarbonate: step 1/1. Its pathway is pyrimidine metabolism; UMP biosynthesis via de novo pathway; (S)-dihydroorotate from bicarbonate: step 1/3. In terms of biological role, small subunit of the glutamine-dependent carbamoyl phosphate synthetase (CPSase). CPSase catalyzes the formation of carbamoyl phosphate from the ammonia moiety of glutamine, carbonate, and phosphate donated by ATP, constituting the first step of 2 biosynthetic pathways, one leading to arginine and/or urea and the other to pyrimidine nucleotides. The small subunit (glutamine amidotransferase) binds and cleaves glutamine to supply the large subunit with the substrate ammonia. This chain is Carbamoyl phosphate synthase small chain, found in Synechococcus sp. (strain ATCC 27144 / PCC 6301 / SAUG 1402/1) (Anacystis nidulans).